The primary structure comprises 233 residues: MADS-box protein CMB1 (233 aa).

An MADS-box domain is found at 3 to 58 (RGRVELKRIENKINRQVTFAKRRNGLLKKAYELSVLCDAEVALIVFSNRGKLYEFC). The K-box domain occupies 87–177 (TESSYQEYLK…KTKLEESCAS (91 aa)).

It localises to the nucleus. The protein is MADS-box protein CMB1 (CMB1) of Dianthus caryophyllus (Carnation).